A 63-amino-acid chain; its full sequence is uncharacterized protein (63 aa).

The tract at residues 35–63 (PKPDSLISEHPTAQEAMDAKKRYEDPDKE) is disordered. Residues 51 to 63 (MDAKKRYEDPDKE) are compositionally biased toward basic and acidic residues.

This is an uncharacterized protein from Escherichia coli O157:H7.